A 499-amino-acid polypeptide reads, in one-letter code: Protein SENSITIVE TO PROTON RHIZOTOXICITY 1 (499 aa).

The tract at residues 1–31 is disordered; it reads METEDDLCNTNWGSSSSKSREPGSSDCGNST. The C2H2-type 1 zinc-finger motif lies at 244–266; the sequence is HFCTICGKGFKRDANLRMHMRGH. The C2H2-type 2; atypical zinc finger occupies 354-385; the sequence is KHCGKNKWLCSCGTTFSRKDKLFGHIALFQGH. Residues 390 to 436 are disordered; that stretch reads PLEETKPSASTSTQRGSSEGGNNNQGMVGFNLGSASNANQETTQPGM. Polar residues-rich tracts occupy residues 396–415 and 422–435; these read PSASTSTQRGSSEGGNNNQG and GSASNANQETTQPG.

Expressed in roots (e.g. root tips and lateral roots), leaves, flowers (e.g. stigma, sepal, anther, and filament), stems, siliques and cotyledons.

It localises to the nucleus. In terms of biological role, probable transcription factor. Together with STOP2, plays a critical role in tolerance to major stress factors in acid soils such as proton H(+) and aluminum ion Al(3+). Required for the expression of genes in response to acidic stress (e.g. ALMT1 and MATE), and Al-activated citrate exudation. In Arabidopsis thaliana (Mouse-ear cress), this protein is Protein SENSITIVE TO PROTON RHIZOTOXICITY 1.